The chain runs to 100 residues: Large ribosomal subunit protein mL53 (100 aa).

This sequence belongs to the mitochondrion-specific ribosomal protein mL53 family. As to quaternary structure, component of the mitochondrial large ribosomal subunit (mt-LSU). Mature yeast 74S mitochondrial ribosomes consist of a small (37S) and a large (54S) subunit. The 37S small subunit contains a 15S ribosomal RNA (15S mt-rRNA) and at least 32 different proteins. The 54S large subunit contains a 21S rRNA (21S mt-rRNA) and at least 45 different proteins.

The protein localises to the mitochondrion. Its function is as follows. Component of the mitochondrial ribosome (mitoribosome), a dedicated translation machinery responsible for the synthesis of mitochondrial genome-encoded proteins, including at least some of the essential transmembrane subunits of the mitochondrial respiratory chain. The mitoribosomes are attached to the mitochondrial inner membrane and translation products are cotranslationally integrated into the membrane. This Schizosaccharomyces pombe (strain 972 / ATCC 24843) (Fission yeast) protein is Large ribosomal subunit protein mL53 (mrpl44).